Here is a 390-residue protein sequence, read N- to C-terminus: Phosphopentomutase (390 aa).

Positions 9, 283, 288, 324, 325, and 336 each coordinate Mn(2+).

It belongs to the phosphopentomutase family. Mn(2+) is required as a cofactor.

It localises to the cytoplasm. It catalyses the reaction 2-deoxy-alpha-D-ribose 1-phosphate = 2-deoxy-D-ribose 5-phosphate. The enzyme catalyses alpha-D-ribose 1-phosphate = D-ribose 5-phosphate. The protein operates within carbohydrate degradation; 2-deoxy-D-ribose 1-phosphate degradation; D-glyceraldehyde 3-phosphate and acetaldehyde from 2-deoxy-alpha-D-ribose 1-phosphate: step 1/2. Functionally, isomerase that catalyzes the conversion of deoxy-ribose 1-phosphate (dRib-1-P) and ribose 1-phosphate (Rib-1-P) to deoxy-ribose 5-phosphate (dRib-5-P) and ribose 5-phosphate (Rib-5-P), respectively. The chain is Phosphopentomutase from Thermotoga petrophila (strain ATCC BAA-488 / DSM 13995 / JCM 10881 / RKU-1).